The primary structure comprises 95 residues: Co-chaperonin GroES (95 aa).

Belongs to the GroES chaperonin family. In terms of assembly, heptamer of 7 subunits arranged in a ring. Interacts with the chaperonin GroEL.

It localises to the cytoplasm. Its function is as follows. Together with the chaperonin GroEL, plays an essential role in assisting protein folding. The GroEL-GroES system forms a nano-cage that allows encapsulation of the non-native substrate proteins and provides a physical environment optimized to promote and accelerate protein folding. GroES binds to the apical surface of the GroEL ring, thereby capping the opening of the GroEL channel. This Desulfosudis oleivorans (strain DSM 6200 / JCM 39069 / Hxd3) (Desulfococcus oleovorans) protein is Co-chaperonin GroES.